Reading from the N-terminus, the 191-residue chain is Lipopolysaccharide export system protein LptC (191 aa).

A helical membrane pass occupies residues 7-25; that stretch reads WVIIVLSLAVLVMIGINMA.

It belongs to the LptC family. In terms of assembly, component of the lipopolysaccharide transport and assembly complex. Interacts with LptA and the LptBFG transporter complex.

It is found in the cell inner membrane. In terms of biological role, involved in the assembly of lipopolysaccharide (LPS). Required for the translocation of LPS from the inner membrane to the outer membrane. Facilitates the transfer of LPS from the inner membrane to the periplasmic protein LptA. Could be a docking site for LptA. This chain is Lipopolysaccharide export system protein LptC, found in Escherichia coli O157:H7.